The primary structure comprises 246 residues: TATA-box-binding protein (246 aa).

The interval 1–27 (MSSDKTSQQTFKLAPNNSVAQSNSIDQ) is disordered. A run of 2 repeats spans residues 53–129 (LQNI…AKII) and 143–220 (IQNI…YWVL).

It belongs to the TBP family. As to quaternary structure, belongs to the TFIID complex together with the TBP-associated factors (TAFs). Binds DNA as monomer.

It localises to the nucleus. In terms of biological role, general transcription factor that functions at the core of the DNA-binding multiprotein factor TFIID. Binding of TFIID to the TATA box is the initial transcriptional step of the pre-initiation complex (PIC), playing a role in the activation of eukaryotic genes transcribed by RNA polymerase II. The protein is TATA-box-binding protein of Tetrahymena thermophila.